A 144-amino-acid polypeptide reads, in one-letter code: Ribosome association toxin RatA (144 aa).

It belongs to the ribosome association toxin RatA family.

Toxic component of a type II toxin-antitoxin (TA) system. Binds to 50S ribosomal subunits, preventing them from associating with 30S subunits to form 70S ribosomes. Its antitoxin is unknown. The polypeptide is Ribosome association toxin RatA (ratA) (Pseudomonas aeruginosa (strain ATCC 15692 / DSM 22644 / CIP 104116 / JCM 14847 / LMG 12228 / 1C / PRS 101 / PAO1)).